A 362-amino-acid chain; its full sequence is HMG box-containing protein C19G7.04 (362 aa).

The region spanning 135–299 (KCFLARLEDE…RLCKSQIKQI (165 aa)) is the SprT-like domain. The HMG box DNA-binding region spans 306–348 (PNAFQIFLKENSKRLRKLHPHITHKELMKKLSDEYHRTKDAKQ).

It is found in the nucleus. It localises to the cytoplasm. The protein resides in the cytoskeleton. The protein localises to the spindle. The protein is HMG box-containing protein C19G7.04 of Schizosaccharomyces pombe (strain 972 / ATCC 24843) (Fission yeast).